Here is a 406-residue protein sequence, read N- to C-terminus: Cysteine desulfurase (406 aa).

K226 is modified (N6-(pyridoxal phosphate)lysine). The active-site Cysteine persulfide intermediate is C364.

The protein belongs to the class-V pyridoxal-phosphate-dependent aminotransferase family. Csd subfamily. As to quaternary structure, homodimer. Interacts with SufE and the SufBCD complex composed of SufB, SufC and SufD. The interaction with SufE is required to mediate the direct transfer of the sulfur atom from the S-sulfanylcysteine. Pyridoxal 5'-phosphate serves as cofactor.

The protein localises to the cytoplasm. It carries out the reaction (sulfur carrier)-H + L-cysteine = (sulfur carrier)-SH + L-alanine. The enzyme catalyses L-selenocysteine + AH2 = hydrogenselenide + L-alanine + A + H(+). It participates in cofactor biosynthesis; iron-sulfur cluster biosynthesis. Its function is as follows. Cysteine desulfurases mobilize the sulfur from L-cysteine to yield L-alanine, an essential step in sulfur metabolism for biosynthesis of a variety of sulfur-containing biomolecules. Component of the suf operon, which is activated and required under specific conditions such as oxidative stress and iron limitation. Acts as a potent selenocysteine lyase in vitro, that mobilizes selenium from L-selenocysteine. Selenocysteine lyase activity is however unsure in vivo. This Yersinia pestis bv. Antiqua (strain Angola) protein is Cysteine desulfurase.